A 268-amino-acid chain; its full sequence is uncharacterized protein (268 aa).

This is an uncharacterized protein from Acanthamoeba polyphaga mimivirus (APMV).